A 149-amino-acid chain; its full sequence is Sec-independent protein translocase protein TatB (149 aa).

Residues 1-21 (MFDIGFTELIVIGIVALVVVG) traverse the membrane as a helical segment. The disordered stretch occupies residues 92–149 (VDMLDKSVRNEPQNAQTPPQTADAEPAQPDVRQQTLPLEEPDQNRAAGEPSSTSTRPA). Residues 101 to 111 (NEPQNAQTPPQ) are compositionally biased toward polar residues.

The protein belongs to the TatB family. As to quaternary structure, the Tat system comprises two distinct complexes: a TatABC complex, containing multiple copies of TatA, TatB and TatC subunits, and a separate TatA complex, containing only TatA subunits. Substrates initially bind to the TatABC complex, which probably triggers association of the separate TatA complex to form the active translocon.

It is found in the cell inner membrane. Functionally, part of the twin-arginine translocation (Tat) system that transports large folded proteins containing a characteristic twin-arginine motif in their signal peptide across membranes. Together with TatC, TatB is part of a receptor directly interacting with Tat signal peptides. TatB may form an oligomeric binding site that transiently accommodates folded Tat precursor proteins before their translocation. This chain is Sec-independent protein translocase protein TatB, found in Thiobacillus denitrificans (strain ATCC 25259 / T1).